A 313-amino-acid chain; its full sequence is Porphobilinogen deaminase (313 aa).

Cys-242 is modified (S-(dipyrrolylmethanemethyl)cysteine).

The protein belongs to the HMBS family. As to quaternary structure, monomer. It depends on dipyrromethane as a cofactor.

It carries out the reaction 4 porphobilinogen + H2O = hydroxymethylbilane + 4 NH4(+). Its pathway is porphyrin-containing compound metabolism; protoporphyrin-IX biosynthesis; coproporphyrinogen-III from 5-aminolevulinate: step 2/4. Its function is as follows. Tetrapolymerization of the monopyrrole PBG into the hydroxymethylbilane pre-uroporphyrinogen in several discrete steps. This is Porphobilinogen deaminase from Pseudomonas syringae pv. syringae (strain B728a).